The sequence spans 670 residues: WD repeat-containing protein 48 homolog (670 aa).

WD repeat units lie at residues 13 to 52 (RHRN…SQEP), 59 to 98 (HHND…CMST), 101 to 140 (THRD…ALTA), 152 to 191 (GSKD…KIAK), 194 to 233 (GHTE…CIQT), 236 to 275 (VHSE…NSVL), and 278 to 317 (EERA…KLSN). Positions 321 to 348 (SSNSSINSGGGGDGTPVTNSASNATPAS) are disordered. Residues 338 to 348 (TNSASNATPAS) show a composition bias toward low complexity. The stretch at 359–398 (KGGAAIKKYHVLNDKRFMLTKDSEQNVAIYDVLKVKKVED) is one WD 8 repeat. Residues 613 to 625 (GGGGGSSTGGGGN) are compositionally biased toward gly residues. The interval 613-645 (GGGGGSSTGGGGNSNSSQNNSQSDANSEGSQVP) is disordered. A compositionally biased stretch (low complexity) spans 626–635 (SNSSQNNSQS).

Belongs to the WD repeat WDR48 family. In terms of assembly, catalytic component of the Usp12-46 deubiquitylase complex consisting of Usp12-46, Wdr20 and Uaf1; regulatory subunit that, together wtih Wdr20, stabilizes Usp12-46. The Usp12-46 deubiquitylase complex associates with arr/arrow; the interaction leads to deubiquitination and stabilization of arr/arrow.

Regulatory component of the Usp12-46 deubiquitylase complex. activates deubiquitination by increasing the catalytic turnover without increasing the affinity of deubiquitinating enzymes for the substrate. The complex deubiquitylates the wg/wingless-signaling receptor arr/arrow, which stabilizes the receptor and increases its concentration at the cell surface; this enhances the sensitivity of cells to wg/wingless-signal stimulation. This increases the amplitude and spatial range of the signaling response to the wg/wingless morphogen gradient, facilitating the precise concentration-dependent regulation of its target genes. Together with Wdr20 and Usp12-46 required for wg/wingless-mediated signaling in the wing imaginal disc and for wg/wingless-dependent regulation of intestinal stem cell proliferation. This is WD repeat-containing protein 48 homolog from Culex quinquefasciatus (Southern house mosquito).